A 205-amino-acid chain; its full sequence is Helix-loop-helix protein 4 (205 aa).

The tract at residues 3-16 (MVVAKRNARERTRV) is basic motif. The bHLH domain occupies 3-56 (MVVAKRNARERTRVHTVNQAFLVLKQHLPSLRQFTKRVSKLRILNAAITYIDTL). Positions 17–56 (HTVNQAFLVLKQHLPSLRQFTKRVSKLRILNAAITYIDTL) are helix-loop-helix motif.

In terms of tissue distribution, expressed in the ADL sensory neurons.

The protein resides in the nucleus. Acts as a transcriptional regulator. May mediate transcriptional activation by binding to the E-box motif 5'-CANNTG-3'. Required for the correct morphology, terminal identity and function of the ADL sensory neurons by controlling the expression of the ADL-specific gene repertoire, including chemoreceptor encoding genes, ion channel encoding genes, neuropeptides and the neurotransmitter eat-4. Regulates the expression of the srh-234 chemoreceptor encoding gene in the ADL neurons under feeding conditions. Plays a role in the chemorepulsive response toward ascaroside pheromones mediated by the ADL sensory neurons. This Caenorhabditis elegans protein is Helix-loop-helix protein 4 (hlh-4).